The chain runs to 181 residues: TATA-box-binding protein (181 aa).

2 consecutive repeat copies span residues 7–83 (IVNV…IKEL) and 98–173 (VQNM…LTTL).

Belongs to the TBP family.

Its function is as follows. General factor that plays a role in the activation of archaeal genes transcribed by RNA polymerase. Binds specifically to the TATA box promoter element which lies close to the position of transcription initiation. This chain is TATA-box-binding protein, found in Methanococcus maripaludis (strain C7 / ATCC BAA-1331).